The sequence spans 118 residues: Small ribosomal subunit protein uS13 (118 aa).

A disordered region spans residues 94–118; that stretch reads SLPLRGQRTKTNARTRKGPRKPIKK.

This sequence belongs to the universal ribosomal protein uS13 family. Part of the 30S ribosomal subunit. Forms a loose heterodimer with protein S19. Forms two bridges to the 50S subunit in the 70S ribosome.

Its function is as follows. Located at the top of the head of the 30S subunit, it contacts several helices of the 16S rRNA. In the 70S ribosome it contacts the 23S rRNA (bridge B1a) and protein L5 of the 50S subunit (bridge B1b), connecting the 2 subunits; these bridges are implicated in subunit movement. Contacts the tRNAs in the A and P-sites. The chain is Small ribosomal subunit protein uS13 from Vibrio vulnificus (strain CMCP6).